A 329-amino-acid polypeptide reads, in one-letter code: NADH-quinone oxidoreductase subunit H (329 aa).

The next 9 membrane-spanning stretches (helical) occupy residues 9-29 (LIKI…ATYI), 42-62 (GPCY…IKLF), 75-95 (FIFT…MAPI), 117-137 (IGFL…ILAG), 154-174 (IQLL…LMVV), 188-208 (GGFL…FLIA), 238-258 (LKWG…SFVI), 260-280 (IVFF…AILI), and 309-329 (WKIM…IILI).

Belongs to the complex I subunit 1 family. In terms of assembly, NDH-1 is composed of 14 different subunits. Subunits NuoA, H, J, K, L, M, N constitute the membrane sector of the complex.

Its subcellular location is the cell inner membrane. The catalysed reaction is a quinone + NADH + 5 H(+)(in) = a quinol + NAD(+) + 4 H(+)(out). In terms of biological role, NDH-1 shuttles electrons from NADH, via FMN and iron-sulfur (Fe-S) centers, to quinones in the respiratory chain. The immediate electron acceptor for the enzyme in this species is believed to be ubiquinone. Couples the redox reaction to proton translocation (for every two electrons transferred, four hydrogen ions are translocated across the cytoplasmic membrane), and thus conserves the redox energy in a proton gradient. This subunit may bind ubiquinone. The polypeptide is NADH-quinone oxidoreductase subunit H (Helicobacter pylori (strain G27)).